The following is a 444-amino-acid chain: MTERKYFGTDGVRAVAGEFPLTPAWVMALGAAAGEVFKRRNPRASVVIGKDTRQSGDMLEAALAAGLTSRGVNVVHLGVLPTPGVSYLTRHLGAEAGVVISASHNPYEDNGIKFFGPGGGKLSDATELEIEAAIDEAATLAPVTGVNLGSVTNYTEAERLYTAFLSSHAPDLSGMRIALDCANGAAYRVAPKVFQQAGADVFAVYTTPDGRNINRGCGSTHMDHLRLIVREGDYDLGIAFDGDADRALFVDSRGNMIHGDHMLLLSARARGEKAVVATIMTNMALEVKLQEAGLTLERTAVGDRYVHERLHAKGLNLGGEQSGHVLFLDVSPTGDGVLTALLTLSSMKKLGTTLDALYDELVMFPQTLVNVRVKDKKAIASDPAVQHAVADAEKQLAGKGRINLRPSGTENLIRVMVEGQDEGEIHDIAAAVAKVVEERGAAGA.

Ser103 serves as the catalytic Phosphoserine intermediate. Mg(2+) is bound by residues Ser103, Asp241, Asp243, and Asp245. Phosphoserine is present on Ser103.

The protein belongs to the phosphohexose mutase family. Mg(2+) serves as cofactor. Post-translationally, activated by phosphorylation.

The catalysed reaction is alpha-D-glucosamine 1-phosphate = D-glucosamine 6-phosphate. Catalyzes the conversion of glucosamine-6-phosphate to glucosamine-1-phosphate. The chain is Phosphoglucosamine mutase from Deinococcus radiodurans (strain ATCC 13939 / DSM 20539 / JCM 16871 / CCUG 27074 / LMG 4051 / NBRC 15346 / NCIMB 9279 / VKM B-1422 / R1).